A 200-amino-acid chain; its full sequence is 3-isopropylmalate dehydratase small subunit (200 aa).

It belongs to the LeuD family. LeuD type 1 subfamily. Heterodimer of LeuC and LeuD.

The enzyme catalyses (2R,3S)-3-isopropylmalate = (2S)-2-isopropylmalate. It participates in amino-acid biosynthesis; L-leucine biosynthesis; L-leucine from 3-methyl-2-oxobutanoate: step 2/4. Its function is as follows. Catalyzes the isomerization between 2-isopropylmalate and 3-isopropylmalate, via the formation of 2-isopropylmaleate. In Haemophilus influenzae (strain PittEE), this protein is 3-isopropylmalate dehydratase small subunit.